Here is a 510-residue protein sequence, read N- to C-terminus: 2,3-bisphosphoglycerate-independent phosphoglycerate mutase (510 aa).

Mn(2+)-binding residues include Asp10 and Ser60. Residue Ser60 is the Phosphoserine intermediate of the active site. Substrate is bound by residues His121, 150-151, Arg182, Arg188, 252-255, and Lys325; these read RD and RPDR. Mn(2+)-binding residues include Asp392, His396, Asp433, His434, and His451.

The protein belongs to the BPG-independent phosphoglycerate mutase family. Mn(2+) is required as a cofactor.

The protein resides in the plastid. The protein localises to the chloroplast. The catalysed reaction is (2R)-2-phosphoglycerate = (2R)-3-phosphoglycerate. It functions in the pathway carbohydrate degradation; glycolysis; pyruvate from D-glyceraldehyde 3-phosphate: step 3/5. Catalyzes the interconversion of 2-phosphoglycerate and 3-phosphoglycerate. The polypeptide is 2,3-bisphosphoglycerate-independent phosphoglycerate mutase (Gracilaria tenuistipitata var. liui (Red alga)).